We begin with the raw amino-acid sequence, 1385 residues long: L-2-aminoadipate reductase large subunit (1385 aa).

Residues 843–920 (SSFSPLEQEI…ELAKEISRVR (78 aa)) enclose the Carrier domain. S880 carries the O-(pantetheine 4'-phosphoryl)serine modification.

Belongs to the ATP-dependent AMP-binding enzyme family. Heterodimer of an alpha and a beta subunit. It depends on pantetheine 4'-phosphate as a cofactor.

It carries out the reaction (S)-2-amino-6-oxohexanoate + NADP(+) + H2O = L-2-aminoadipate + NADPH + 2 H(+). The enzyme catalyses (S)-2-amino-6-oxohexanoate + NAD(+) + H2O = L-2-aminoadipate + NADH + 2 H(+). It catalyses the reaction (S)-2-amino-6-oxohexanoate + AMP + diphosphate + NADP(+) = L-2-aminoadipate + ATP + NADPH + H(+). Its pathway is amino-acid biosynthesis; L-lysine biosynthesis via AAA pathway; L-lysine from L-alpha-aminoadipate (fungal route): step 1/3. Functionally, catalyzes the activation of alpha-aminoadipate by ATP-dependent adenylation and the reduction of activated alpha-aminoadipate by NADPH. The activated alpha-aminoadipate is bound to the phosphopantheinyl group of the enzyme itself before it is reduced to (S)-2-amino-6-oxohexanoate. This Eremothecium gossypii (strain ATCC 10895 / CBS 109.51 / FGSC 9923 / NRRL Y-1056) (Yeast) protein is L-2-aminoadipate reductase large subunit (LYS2).